The sequence spans 197 residues: dTTP/UTP pyrophosphatase (197 aa).

Residue D70 is the Proton acceptor of the active site.

Belongs to the Maf family. YhdE subfamily. A divalent metal cation serves as cofactor.

It is found in the cytoplasm. It catalyses the reaction dTTP + H2O = dTMP + diphosphate + H(+). The catalysed reaction is UTP + H2O = UMP + diphosphate + H(+). Its function is as follows. Nucleoside triphosphate pyrophosphatase that hydrolyzes dTTP and UTP. May have a dual role in cell division arrest and in preventing the incorporation of modified nucleotides into cellular nucleic acids. The polypeptide is dTTP/UTP pyrophosphatase (yceF2) (Shigella sonnei (strain Ss046)).